The chain runs to 269 residues: Formamidopyrimidine-DNA glycosylase (269 aa).

Catalysis depends on Pro-2, which acts as the Schiff-base intermediate with DNA. Glu-3 functions as the Proton donor in the catalytic mechanism. The active-site Proton donor; for beta-elimination activity is Lys-57. Residues His-90, Arg-109, and Lys-150 each contribute to the DNA site. Residues 235–269 (QVYGRKGEPCRVCGTPIVATKHAQRATFYCRHCQK) form an FPG-type zinc finger. The Proton donor; for delta-elimination activity role is filled by Arg-259.

Belongs to the FPG family. As to quaternary structure, monomer. The cofactor is Zn(2+).

The enzyme catalyses Hydrolysis of DNA containing ring-opened 7-methylguanine residues, releasing 2,6-diamino-4-hydroxy-5-(N-methyl)formamidopyrimidine.. It carries out the reaction 2'-deoxyribonucleotide-(2'-deoxyribose 5'-phosphate)-2'-deoxyribonucleotide-DNA = a 3'-end 2'-deoxyribonucleotide-(2,3-dehydro-2,3-deoxyribose 5'-phosphate)-DNA + a 5'-end 5'-phospho-2'-deoxyribonucleoside-DNA + H(+). Involved in base excision repair of DNA damaged by oxidation or by mutagenic agents. Acts as a DNA glycosylase that recognizes and removes damaged bases. Has a preference for oxidized purines, such as 7,8-dihydro-8-oxoguanine (8-oxoG). Has AP (apurinic/apyrimidinic) lyase activity and introduces nicks in the DNA strand. Cleaves the DNA backbone by beta-delta elimination to generate a single-strand break at the site of the removed base with both 3'- and 5'-phosphates. This chain is Formamidopyrimidine-DNA glycosylase, found in Salmonella enteritidis PT4 (strain P125109).